The primary structure comprises 56 residues: Small ribosomal subunit protein uS14 (56 aa).

4 residues coordinate Zn(2+): Cys-21, Cys-24, Cys-39, and Cys-42.

The protein belongs to the universal ribosomal protein uS14 family. Zinc-binding uS14 subfamily. As to quaternary structure, part of the 30S ribosomal subunit. Requires Zn(2+) as cofactor.

In terms of biological role, binds 16S rRNA, required for the assembly of 30S particles. In Methanospirillum hungatei JF-1 (strain ATCC 27890 / DSM 864 / NBRC 100397 / JF-1), this protein is Small ribosomal subunit protein uS14.